The primary structure comprises 1007 residues: Protocadherin alpha-C2 (1007 aa).

The N-terminal stretch at 1–42 (MEQAGTRPAATEHPRLRRPMPWLLLLPLLLLLLLLLPGPAAS) is a signal peptide. Cadherin domains are found at residues 43-148 (QLRY…SPRF), 149-257 (PRPN…SPAF), 258-365 (DQST…APEV), 374-469 (VPEN…PPSF), and 470-579 (LEDS…APHI). The Extracellular portion of the chain corresponds to 43–708 (QLRYSVPEEQ…RTYSEITLYL (666 aa)). Asn280 and Asn436 each carry an N-linked (GlcNAc...) asparagine glycan. 2 N-linked (GlcNAc...) asparagine glycosylation sites follow: Asn586 and Asn657. A Cadherin 6 domain is found at 594 to 691 (VPRTAPAGYL…DRVSKILPDT (98 aa)). Residues 709 to 729 (IIALSTVSFIFLLTIIILSII) form a helical membrane-spanning segment. The Cytoplasmic portion of the chain corresponds to 730-1007 (KCYRYTAYGT…GNSTTDNSDQ (278 aa)). PXXP repeat units follow at residues 856 to 859 (PRQP), 889 to 892 (PGGP), 930 to 933 (PGNP), and 948 to 951 (PGSP). The interval 856 to 951 (PRQPNPDWRY…PDKFIIPGSP (96 aa)) is 4 X 4 AA repeats of P-X-X-P. The disordered stretch occupies residues 885–1007 (LRAGPGGPDQ…GNSTTDNSDQ (123 aa)). The segment covering 966-980 (DKSDFITFGKKEETK) has biased composition (basic and acidic residues).

It localises to the cell membrane. Potential calcium-dependent cell-adhesion protein. May be involved in the establishment and maintenance of specific neuronal connections in the brain. The sequence is that of Protocadherin alpha-C2 (PCDHAC2) from Homo sapiens (Human).